Here is an 816-residue protein sequence, read N- to C-terminus: uncharacterized protein (816 aa).

Disordered regions lie at residues 1–34, 65–101, 154–406, and 770–816; these read MLFNINRQEDDPFTQLINQSSANTQNQQAHQQES, RQNNRAYGEDAKNRKFPTVSATSAYSKQQPKDLGYKN, DEKD…ENPE, and RQHK…VMYA. The segment covering 18–32 has biased composition (low complexity); it reads NQSSANTQNQQAHQQ. The segment covering 83–92 has biased composition (polar residues); that stretch reads VSATSAYSKQ. Low complexity predominate over residues 161–223; that stretch reads TTTSSSTSTS…STSTTSTSTT (63 aa). Residues 246-260 show a composition bias toward polar residues; sequence ESTSIGKGTADSAQI. Serine 286 carries the phosphoserine modification. Positions 292–316 are enriched in basic and acidic residues; the sequence is DEQKEEKSDVKKVNPPSGEEKKEVE. Residues 317–326 are compositionally biased toward acidic residues; that stretch reads AEGDAEEETE. Over residues 327 to 342 the composition is skewed to low complexity; it reads QSSAEESAERTSTPET. Phosphoserine is present on residues serine 343 and serine 347. Residues 343 to 353 show a composition bias toward acidic residues; it reads SEPESEEDESP. Residues 380-396 show a composition bias toward low complexity; that stretch reads KSPTSSSTQKSKTAAPS. 2 stretches are compositionally biased toward basic and acidic residues: residues 770–792 and 799–816; these read RQHKQAEGIHAAENHKIPNDRSQ and PKDDSLYEYHTEEDVMYA. Position 809 is a phosphothreonine (threonine 809).

Post-translationally, pyrophosphorylated by 5-diphosphoinositol pentakisphosphate (5-IP7). Serine pyrophosphorylation is achieved by Mg(2+)-dependent, but enzyme independent transfer of a beta-phosphate from a inositol pyrophosphate to a pre-phosphorylated serine residue.

This is an uncharacterized protein from Saccharomyces cerevisiae (strain ATCC 204508 / S288c) (Baker's yeast).